The chain runs to 1038 residues: Isoleucine--tRNA ligase (1038 aa).

Positions 47–57 (PFATGLPHYGH) match the 'HIGH' region motif. Residues 591–595 (KMSKR) carry the 'KMSKS' region motif. Lys-594 serves as a coordination point for ATP.

The protein belongs to the class-I aminoacyl-tRNA synthetase family. IleS type 2 subfamily. Monomer. Requires Zn(2+) as cofactor.

Its subcellular location is the cytoplasm. The enzyme catalyses tRNA(Ile) + L-isoleucine + ATP = L-isoleucyl-tRNA(Ile) + AMP + diphosphate. In terms of biological role, catalyzes the attachment of isoleucine to tRNA(Ile). As IleRS can inadvertently accommodate and process structurally similar amino acids such as valine, to avoid such errors it has two additional distinct tRNA(Ile)-dependent editing activities. One activity is designated as 'pretransfer' editing and involves the hydrolysis of activated Val-AMP. The other activity is designated 'posttransfer' editing and involves deacylation of mischarged Val-tRNA(Ile). This is Isoleucine--tRNA ligase from Protochlamydia amoebophila (strain UWE25).